Consider the following 327-residue polypeptide: Interleukin-12 subunit beta (327 aa).

An N-terminal signal peptide occupies residues 1–22 (MHPQQLVVSWFSLVLLASPIVA). One can recognise an Ig-like C2-type domain in the interval 23-106 (IWELEKNVYI…LSRSLLLLHK (84 aa)). Residues Cys50 and Cys90 are joined by a disulfide bond. Asn223 carries N-linked (GlcNAc...) asparagine glycosylation. A Fibronectin type-III domain is found at 238–327 (PPKNLQLKPL…WSEWASVSCS (90 aa)).

This sequence belongs to the IL-12B family. In terms of assembly, heterodimer with IL12A; disulfide-linked. The heterodimer is known as interleukin IL-12. Heterodimer with IL23A; disulfide-linked. The heterodimer is known as interleukin IL-23. Also secreted as a monomer. Interacts with NBR1; this interaction promotes IL-12 secretion.

Cytokine that can act as a growth factor for activated T and NK cells, enhance the lytic activity of NK/lymphokine-activated killer cells, and stimulate the production of IFN-gamma by resting PBMC. Functionally, associates with IL23A to form the IL-23 interleukin, a heterodimeric cytokine which functions in innate and adaptive immunity. IL-23 may constitute with IL-17 an acute response to infection in peripheral tissues. IL-23 binds to a heterodimeric receptor complex composed of IL12RB1 and IL23R, activates the Jak-Stat signaling cascade, stimulates memory rather than naive T-cells and promotes production of pro-inflammatory cytokines. IL-23 induces autoimmune inflammation and thus may be responsible for autoimmune inflammatory diseases and may be important for tumorigenesis. This Bubalus bubalis (Domestic water buffalo) protein is Interleukin-12 subunit beta (IL12B).